Here is a 64-residue protein sequence, read N- to C-terminus: Large ribosomal subunit protein uL29 (64 aa).

This sequence belongs to the universal ribosomal protein uL29 family.

This Cupriavidus metallidurans (strain ATCC 43123 / DSM 2839 / NBRC 102507 / CH34) (Ralstonia metallidurans) protein is Large ribosomal subunit protein uL29.